Reading from the N-terminus, the 495-residue chain is Cobyric acid synthase (495 aa).

A GATase cobBQ-type domain is found at 249–442 (KFIVKVPVVT…LHGVFDEPEA (194 aa)). Residue C330 is the Nucleophile of the active site. The active site involves H434.

The protein belongs to the CobB/CobQ family. CobQ subfamily.

It participates in cofactor biosynthesis; adenosylcobalamin biosynthesis. In terms of biological role, catalyzes amidations at positions B, D, E, and G on adenosylcobyrinic A,C-diamide. NH(2) groups are provided by glutamine, and one molecule of ATP is hydrogenolyzed for each amidation. In Aliivibrio fischeri (strain ATCC 700601 / ES114) (Vibrio fischeri), this protein is Cobyric acid synthase.